A 234-amino-acid chain; its full sequence is Glycerol-3-phosphate acyltransferase (234 aa).

6 consecutive transmembrane segments (helical) span residues 4 to 24, 56 to 76, 90 to 110, 122 to 142, 152 to 172, and 191 to 211; these read LLAILVVSYIVGSIPTSLIAG, TVTLIDIIKGVVAAVSVVAFF, VALRLLAGMSAVIGHVFTVFA, AGMLIGIAPVSMLMVIGVFLL, VASILAAIAFPLIIAIRKYLF, and FHDSLDYHLIIFGLIVAIAII.

Belongs to the PlsY family. In terms of assembly, probably interacts with PlsX.

Its subcellular location is the cell inner membrane. The catalysed reaction is an acyl phosphate + sn-glycerol 3-phosphate = a 1-acyl-sn-glycero-3-phosphate + phosphate. The protein operates within lipid metabolism; phospholipid metabolism. Functionally, catalyzes the transfer of an acyl group from acyl-phosphate (acyl-PO(4)) to glycerol-3-phosphate (G3P) to form lysophosphatidic acid (LPA). This enzyme utilizes acyl-phosphate as fatty acyl donor, but not acyl-CoA or acyl-ACP. The polypeptide is Glycerol-3-phosphate acyltransferase (Chlorobium chlorochromatii (strain CaD3)).